Consider the following 316-residue polypeptide: Nod factor export ATP-binding protein I (316 aa).

Positions 18–248 (IDFSDVSKTY…LIGCEVIEIY (231 aa)) constitute an ABC transporter domain. 50-57 (GPNGAGKS) is a binding site for ATP.

Belongs to the ABC transporter superfamily. Lipooligosaccharide exporter (TC 3.A.1.102) family. The complex is composed of two ATP-binding proteins (NodI) and two transmembrane proteins (NodJ).

Its subcellular location is the cell inner membrane. Part of the ABC transporter complex NodIJ involved in the export of the nodulation factors (Nod factors), the bacterial signal molecules that induce symbiosis and subsequent nodulation induction. Nod factors are LCO (lipo-chitin oligosaccharide), a modified beta-1,4-linked N-acetylglucosamine oligosaccharide. This subunit is responsible for energy coupling to the transport system. The chain is Nod factor export ATP-binding protein I from Rhizobium etli (strain ATCC 51251 / DSM 11541 / JCM 21823 / NBRC 15573 / CFN 42).